The chain runs to 154 residues: Superoxide dismutase [Cu-Zn] (154 aa).

Cu cation is bound by residues H47, H49, and H64. C58 and C147 form a disulfide bridge. Zn(2+)-binding residues include H64, H72, H81, and D84. A Cu cation-binding site is contributed by H121. Basic and acidic residues predominate over residues 125 to 136; sequence DDLGKGGNEESL. Positions 125 to 144 are disordered; the sequence is DDLGKGGNEESLKTGNAGPR. R144 serves as a coordination point for substrate.

Belongs to the Cu-Zn superoxide dismutase family. In terms of assembly, homodimer. It depends on Cu cation as a cofactor. Requires Zn(2+) as cofactor.

The protein localises to the cytoplasm. The catalysed reaction is 2 superoxide + 2 H(+) = H2O2 + O2. Functionally, destroys radicals which are normally produced within the cells and which are toxic to biological systems. This Neurospora crassa (strain ATCC 24698 / 74-OR23-1A / CBS 708.71 / DSM 1257 / FGSC 987) protein is Superoxide dismutase [Cu-Zn] (sod-1).